The following is a 159-amino-acid chain: RNA pyrophosphohydrolase (159 aa).

In terms of domain architecture, Nudix hydrolase spans 6-149 (GFRPNVGIIL…KREVYRRALK (144 aa)). Positions 38-59 (GGINARETPEEALFRELNEEVG) match the Nudix box motif.

This sequence belongs to the Nudix hydrolase family. RppH subfamily. A divalent metal cation serves as cofactor.

Its function is as follows. Accelerates the degradation of transcripts by removing pyrophosphate from the 5'-end of triphosphorylated RNA, leading to a more labile monophosphorylated state that can stimulate subsequent ribonuclease cleavage. This chain is RNA pyrophosphohydrolase, found in Stutzerimonas stutzeri (strain A1501) (Pseudomonas stutzeri).